A 235-amino-acid chain; its full sequence is Protein mxl-3 (235 aa).

Positions 18–49 (EKQFRKRHHSDSSDDDSSSPKSASPSMDDDRR) are disordered. Positions 47-60 (DRRAHHNELERRRR) are basic motif. In terms of domain architecture, bHLH spans 47 to 98 (DRRAHHNELERRRRDHIKDHFTILKDAIPLLDGEKSSRALILKRAVEFIHVM). A helix-loop-helix motif region spans residues 61–98 (DHIKDHFTILKDAIPLLDGEKSSRALILKRAVEFIHVM).

This sequence belongs to the MAX family. In terms of assembly, may form homodimer. Interacts (via N-terminus) with skn-1 isoforms a and c. As to expression, expressed in the intestine and in the AWC sensory neurons.

Its subcellular location is the nucleus. It localises to the cytoplasm. Transcription factor which regulates the expression of genes involved in lipid metabolism in response to nutrient availability. Binds to the E-box motif 5'-CACGTG-3'. Under well-fed conditions, binds to the promoter and represses the expression of lipase genes lipl-1, lipl-2, lipl-3 and to a lesser extent lipl-5, thereby preventing lipolysis. In response to a high-glucose diet, promotes fatty acid synthesis, elongation and desaturation by up-regulating transcription factor sbp-1 expression. Under well-fed conditions, acts remotely in the intestine to up-regulate the expression of chemoreceptor srh-234 gene in the ADL sensory neuron, possibly by regulating the insulin signaling pathway. The chain is Protein mxl-3 from Caenorhabditis elegans.